Consider the following 158-residue polypeptide: Chromobox protein homolog 7 (158 aa).

One can recognise a Chromo domain in the interval phenylalanine 11–tyrosine 69. The segment at lysine 60–serine 124 is disordered. Positions glycine 68–arginine 78 are enriched in basic residues.

Component of a PRC1-like complex. Distinct PRC1-like core complexes are composed of a RING1 subunit (RING1B or RING1A), one of the six PCGF proteins (PCGF1-6), one PHC protein (PHC1-3) and one of the CBX proteins (CBX2, CBX4, CBX6, CBX7 or CBX8). The composition of the PRC1 complex may differ between the PRC1 complex in pluripotent embryonic stem cells containing RNF2, CBX7 and PCGF2, and the PRC1 complex in differentiating cells containing RNF2, CBX2, CBX4 and BMI1. Interacts with RING1. Interacts with RNF2/RING1B. Interacts with PCGF1, PCGF2, PCGF3, PCGF5 and PCGF6. Interacts (via chromodomain) with histone H3K9Me3 and H3K27me3. Interacts with H3K9Me2 and H4K20Me1. Interacts (via chromodomain) with single-stranded and double-stranded RNA; RNA binding seems to be required for the localization to chromatin.

It localises to the nucleus. It is found in the chromosome. In terms of biological role, component of a Polycomb group (PcG) multiprotein PRC1-like complex, a complex class required to maintain the transcriptionally repressive state of many genes, including Hox genes, throughout development. PcG PRC1 complex acts via chromatin remodeling and modification of histones; it mediates monoubiquitination of histone H2A 'Lys-119', rendering chromatin heritably changed in its expressibility. Promotes histone H3 trimethylation at 'Lys-9' (H3K9me3). Binds to histone H3 trimethylated 'Lys-9' (H3K9me3) or at 'Lys-27' (H3K27me3). May possibly also bind trimethylated lysine residues in other proteins (in vitro). Binds non-coding, single-stranded and double-stranded RNA. Plays a role in the timely repression of differentiation-specific genes in pluripotent embryonic stem cells to maintain the undifferentiated state. Regulator of cellular lifespan by maintaining the repression of CDKN2A, but not by inducing telomerase activity. The chain is Chromobox protein homolog 7 (Cbx7) from Rattus norvegicus (Rat).